Here is a 394-residue protein sequence, read N- to C-terminus: Serine palmitoyltransferase (394 aa).

Residues 111–112 (GF), serine 183, histidine 211, and threonine 239 each bind pyridoxal 5'-phosphate. An N6-(pyridoxal phosphate)lysine modification is found at lysine 242.

It belongs to the class-II pyridoxal-phosphate-dependent aminotransferase family. Pyridoxal 5'-phosphate serves as cofactor.

The enzyme catalyses L-serine + hexadecanoyl-CoA + H(+) = 3-oxosphinganine + CO2 + CoA. It functions in the pathway lipid metabolism; sphingolipid metabolism. Its function is as follows. Involved in de novo bacterial ceramide synthesis. Catalyzes the condensation of L-serine with palmitoyl-CoA (hexadecanoyl-CoA) to produce 3-oxosphinganine. Also capable of using alanine as substrate leading to the formation of 1-deoxysphinganine (1-deoxySa). Contributes to the levels of endogenous sphingolipids in its host. This chain is Serine palmitoyltransferase, found in Bacteroides ovatus (strain ATCC 8483 / DSM 1896 / JCM 5824 / BCRC 10623 / CCUG 4943 / NCTC 11153).